Reading from the N-terminus, the 257-residue chain is NAD-capped RNA hydrolase NudC (257 aa).

Arg-69 contacts substrate. Residues Cys-98 and Cys-101 each coordinate Zn(2+). Residue Glu-111 coordinates substrate. Zn(2+) is bound by residues Cys-116 and Cys-119. A substrate-binding site is contributed by Tyr-124. The region spanning 125–248 (PQIAPCIIVA…TVARRLIEDT (124 aa)) is the Nudix hydrolase domain. Residues Ala-158, Glu-174, and Glu-178 each contribute to the a divalent metal cation site. The Nudix box motif lies at 159–180 (GFVEVGETLEQAVAREVMEESG). 192–199 (QPWPFPQS) serves as a coordination point for substrate. Glu-219 is a binding site for a divalent metal cation. Ala-241 is a substrate binding site.

The protein belongs to the Nudix hydrolase family. NudC subfamily. In terms of assembly, homodimer. Requires Mg(2+) as cofactor. Mn(2+) is required as a cofactor. It depends on Zn(2+) as a cofactor.

The catalysed reaction is a 5'-end NAD(+)-phospho-ribonucleoside in mRNA + H2O = a 5'-end phospho-adenosine-phospho-ribonucleoside in mRNA + beta-nicotinamide D-ribonucleotide + 2 H(+). The enzyme catalyses NAD(+) + H2O = beta-nicotinamide D-ribonucleotide + AMP + 2 H(+). It carries out the reaction NADH + H2O = reduced beta-nicotinamide D-ribonucleotide + AMP + 2 H(+). Its function is as follows. mRNA decapping enzyme that specifically removes the nicotinamide adenine dinucleotide (NAD) cap from a subset of mRNAs by hydrolyzing the diphosphate linkage to produce nicotinamide mononucleotide (NMN) and 5' monophosphate mRNA. The NAD-cap is present at the 5'-end of some mRNAs and stabilizes RNA against 5'-processing. Has preference for mRNAs with a 5'-end purine. Catalyzes the hydrolysis of a broad range of dinucleotide pyrophosphates. This chain is NAD-capped RNA hydrolase NudC, found in Salmonella typhi.